Reading from the N-terminus, the 461-residue chain is Argininosuccinate lyase (461 aa).

Belongs to the lyase 1 family. Argininosuccinate lyase subfamily.

The protein resides in the cytoplasm. It carries out the reaction 2-(N(omega)-L-arginino)succinate = fumarate + L-arginine. It participates in amino-acid biosynthesis; L-arginine biosynthesis; L-arginine from L-ornithine and carbamoyl phosphate: step 3/3. The polypeptide is Argininosuccinate lyase (Dehalococcoides mccartyi (strain ATCC BAA-2100 / JCM 16839 / KCTC 5957 / BAV1)).